The sequence spans 1915 residues: Ankyrin repeat domain-containing protein 36A (1915 aa).

6 ANK repeats span residues Tyr-31–Lys-60, Lys-64–Leu-93, Glu-97–Ile-126, Phe-130–Glu-159, Cys-163–Ala-192, and Leu-196–Ser-225. Disordered regions lie at residues Pro-261–Lys-331, Ala-470–Ser-619, Met-639–Asp-663, Leu-676–Ser-1203, and Lys-1285–Glu-1304. Composition is skewed to polar residues over residues Ile-262–Gln-272 and Lys-297–Gln-306. Low complexity predominate over residues Ser-505–Leu-521. Composition is skewed to basic and acidic residues over residues Pro-551–Ser-562 and Pro-585–Ser-596. 2 stretches are compositionally biased toward polar residues: residues Val-597–Ser-619 and Gly-645–Ala-657. Composition is skewed to basic and acidic residues over residues Arg-806–Arg-815, Arg-874–Arg-883, Ser-931–Arg-951, Arg-976–Arg-985, Arg-1044–Arg-1053, Thr-1100–Arg-1121, and Ile-1134–Gln-1152. Over residues Val-1175–Gln-1196 the composition is skewed to polar residues. Coiled coils occupy residues Ile-1383–Gln-1466, Lys-1504–Gln-1531, Leu-1573–Asp-1614, and Asn-1727–Asp-1814. The segment at Lys-1489–Leu-1508 is disordered.

Belongs to the ANKRD36 family.

This is Ankyrin repeat domain-containing protein 36A (ANKRD36) from Homo sapiens (Human).